The primary structure comprises 239 residues: SKA complex subunit 1 (239 aa).

The segment at 87-115 (PDSVPQKSTRPCLDDEKEGSSVVQPPESG) is disordered. The microtubule binding stretch occupies residues 116–239 (NRHVQLISEQ…RCGPLTFYYA (124 aa)).

The protein belongs to the SKA1 family. Component of the SKA complex, composed of two copies of ska-1 and a single copy of ska-3. The core complex associates with microtubules and may form dimeric assemblies. Interacts with ska-3 and microtubules.

Its subcellular location is the cytoplasm. It localises to the cytoskeleton. It is found in the spindle. The protein resides in the chromosome. The protein localises to the centromere. Its subcellular location is the kinetochore. In terms of biological role, component of the SKA complex, a microtubule plus end-binding complex of the outer kinetochore that stabilizes spindle microtubule-kinetochore attachments, promotes alignment of chromosomes at the mitotic spindle equator (chromosome congression) and assists suppression of the spindle assembly checkpoint. Kinetochores, consisting of a centromere-associated inner segment and a microtubule-contacting outer segment, play a crucial role in chromosome segregation by mediating the physical connection between centromeric DNA and spindle microtubules. The outer kinetochore is made up of the ten-subunit KMN network complex, comprising the MIS12, NDC80 and KNL1 complexes, and auxiliary microtubule-associated components such as the SKA complex; together they connect the outer kinetochore with the inner kinetochore, bind microtubules, and mediate interactions with mitotic checkpoint proteins that delay anaphase until chromosomes are bioriented on the spindle. The SKA complex is loaded onto bioriented kinetochores and it facilitates chromosome congression by stabilizing microtubules and end-on attachment of the NDC80 complex to depolymerizing spindle microtubules, thereby assisting the poleward-moving kinetochore in withstanding microtubule pulling forces. The complex associates with dynamic microtubule plus-ends and can track both depolymerizing and elongating microtubules. The complex recruits protein phosphatase 1 (PP1) to the kinetochore in prometaphase and metaphase, to oppose spindle assembly checkpoint signaling and promote the onset of anaphase. In the complex, it mediates interactions with microtubules. During meiosis the SKA complex stabilizes the meiotic spindle and is required for its migration to the cortex. In Caenorhabditis briggsae, this protein is SKA complex subunit 1.